Consider the following 183-residue polypeptide: Inner membrane-spanning protein YciB (183 aa).

The next 5 helical transmembrane spans lie at 19–39, 53–73, 76–96, 121–141, and 151–171; these read LYGVQQAAITLVIATVIQLIV, IMGIFAVFFGILTAYFNDLNF, WKVTIINGLFAAVLLVSQFVF, LGWAGFFIICMLLNIVISYYF, and TFGFTGLSLIAAIATGVYLYP.

It belongs to the YciB family.

The protein resides in the cell inner membrane. Plays a role in cell envelope biogenesis, maintenance of cell envelope integrity and membrane homeostasis. The sequence is that of Inner membrane-spanning protein YciB from Actinobacillus pleuropneumoniae serotype 5b (strain L20).